We begin with the raw amino-acid sequence, 241 residues long: Phosphatidylcholine synthase (241 aa).

Topologically, residues 1-15 are cytoplasmic; it reads MKIFNYKRVPYAEIR. The chain crosses the membrane as a helical span at residues 16 to 36; the sequence is AFSVHILTASGSFLAFLGVVA. Residues 37 to 41 lie on the Periplasmic side of the membrane; that stretch reads ASEHR. A helical transmembrane segment spans residues 42–62; the sequence is FVDMFWWLGLALLVDGIDGPI. Residues 63-76 lie on the Cytoplasmic side of the membrane; it reads ARKVRVKEVLPNWS. Residues 77-97 form a helical membrane-spanning segment; sequence GDTLDNIIDYVTYVLLPAFAL. At 98-100 the chain is on the periplasmic side; it reads YQS. A helical membrane pass occupies residues 101 to 121; it reads GMIGEPLSFVAAGMIVVSSAI. Topologically, residues 122-133 are cytoplasmic; that stretch reads YYADMGMKTDEY. The helical transmembrane segment at 134 to 154 threads the bilayer; that stretch reads FFSGFPVVWNMVVFTLFVMDA. Residues 155–159 lie on the Periplasmic side of the membrane; sequence SATTA. Residues 160–180 traverse the membrane as a helical segment; sequence MTVVTVSVFLTFLPINFLHPV. At 181–187 the chain is on the cytoplasmic side; that stretch reads RVKRLRP. Residues 188–208 form a helical membrane-spanning segment; the sequence is LNLLVVAIWCALGGYALLMHF. Residues 209–214 lie on the Periplasmic side of the membrane; sequence ETPTWA. A helical transmembrane segment spans residues 215–235; sequence VIAFVASGIYLYCIGGILQFF. The Cytoplasmic segment spans residues 236–241; that stretch reads PSLGAK.

This sequence belongs to the CDP-alcohol phosphatidyltransferase class-I family. Requires Mn(2+) as cofactor.

The protein localises to the cell inner membrane. It catalyses the reaction a CDP-1,2-diacyl-sn-glycerol + choline = a 1,2-diacyl-sn-glycero-3-phosphocholine + CMP + H(+). Condenses choline with CDP-diglyceride to produce phosphatidylcholine and CMP. Affects motility, biofilm formation and virulence of this bacterium when there is a complete loss of phosphatidylcholine formation due to absence of both the synthase (pcs) and the methylation (pmtA) pathways. This is Phosphatidylcholine synthase from Agrobacterium fabrum (strain C58 / ATCC 33970) (Agrobacterium tumefaciens (strain C58)).